We begin with the raw amino-acid sequence, 224 residues long: Thylakoid lumenal 15 kDa protein 1, chloroplastic (224 aa).

The N-terminal 34 residues, 1 to 34, are a transit peptide targeting the chloroplast; the sequence is MVILSNVSLFSCCNISQKPSLFSPSSRSSHCPIR. A thylakoid-targeting transit peptide spans 35–81; it reads CSQSQEGKEVVTSPLRSVVWSLGEEVSKRSLFALVSASLFFVDPALA. Pentapeptide repeat domains follow at residues 116 to 155 and 156 to 196; these read SILRQANFKGAKLLGASFFDADLTGADLSEADLRGADFSL and ANVT…PLRD.

It is found in the plastid. The protein resides in the chloroplast thylakoid lumen. The protein is Thylakoid lumenal 15 kDa protein 1, chloroplastic of Arabidopsis thaliana (Mouse-ear cress).